Reading from the N-terminus, the 208-residue chain is MPLLGDDFPQLAVSTTHGPMKLPCDLKGSWFVLFSHPADFTPVCTTEFVAFQKLMPEFEKLGVKLIGLSIDQIQSHLKWIEWIKEKLGVEITFPVIAANDSIANQIGLLHPGKGTNTVRAVFIVDPNGKVRLVLYYPQEIGRNMEEIVRAVKALQTSDKNKVALPADWPNNGLIKDRAIIPPPPTEAEAKKRLKEYDGYDFWFCHKSL.

The Thioredoxin domain maps to 2 to 156 (PLLGDDFPQL…IVRAVKALQT (155 aa)). The active-site Cysteine sulfenic acid (-SOH) intermediate is Cys-44. Arg-119 serves as a coordination point for substrate.

Belongs to the peroxiredoxin family. Prx6 subfamily. Homodecamer. Pentamer of dimers that assemble into a ring structure.

The protein localises to the cytoplasm. It carries out the reaction a hydroperoxide + [thioredoxin]-dithiol = an alcohol + [thioredoxin]-disulfide + H2O. Its function is as follows. Thiol-specific peroxidase that catalyzes the reduction of hydrogen peroxide and organic hydroperoxides to water and alcohols, respectively. Plays a role in cell protection against oxidative stress by detoxifying peroxides. This is Peroxiredoxin from Treponema denticola (strain ATCC 35405 / DSM 14222 / CIP 103919 / JCM 8153 / KCTC 15104).